The following is a 259-amino-acid chain: DNA adenine methylase (259 aa).

Residues Tyr7, Lys11, Asp50, and Asp171 each contribute to the S-adenosyl-L-methionine site.

Belongs to the N(4)/N(6)-methyltransferase family. As to quaternary structure, monomer.

It catalyses the reaction a 2'-deoxyadenosine in DNA + S-adenosyl-L-methionine = an N(6)-methyl-2'-deoxyadenosine in DNA + S-adenosyl-L-homocysteine + H(+). An alpha subtpe methyltransferase that recognizes the double-stranded sequence 5'-GATC-3' and methylates A-2 on both strands. May prevent degradation of viral DNA by the host restriction-modification antiviral defense system. This Enterobacteria phage T2 (Bacteriophage T2) protein is DNA adenine methylase.